A 339-amino-acid polypeptide reads, in one-letter code: MKRRILLLAGGQSGEHEVSLRSARSVLAALPRDQFDVTPVVISKQGRWLPPTETQKALETGVSSQGGDLMLHRAAAAEGYDAVFPLLHGPMGEDGTIQGLLTLAGIPFVGSGVLGSAVSMDKVMTKQVLDSAGIPQVAWRLAVRREWQQTPDAVRARAAELGYPLFVKPANLGSSVGISKVGSPEELDAALTLAFGLDRRVILEAMTPHKPREVEVGILGNDVPVASPVGELSFDADFYDYETKYTEGRAEMHIPARIPPEVSERIRTEALRAFRALDCAGLARVDFFYVEETGELFLNEVNTMPGFTTTSMYPKLFEAAGLSYSELVTRLVELALEER.

In terms of domain architecture, ATP-grasp spans 126 to 333 (KQVLDSAGIP…YSELVTRLVE (208 aa)). 158-213 (AAELGYPLFVKPANLGSSVGISKVGSPEELDAALTLAFGLDRRVILEAMTPHKPRE) lines the ATP pocket. 3 residues coordinate Mg(2+): Asp286, Glu300, and Asn302.

Belongs to the D-alanine--D-alanine ligase family. Mg(2+) serves as cofactor. The cofactor is Mn(2+).

Its subcellular location is the cytoplasm. The catalysed reaction is 2 D-alanine + ATP = D-alanyl-D-alanine + ADP + phosphate + H(+). It functions in the pathway cell wall biogenesis; peptidoglycan biosynthesis. Cell wall formation. This Deinococcus radiodurans (strain ATCC 13939 / DSM 20539 / JCM 16871 / CCUG 27074 / LMG 4051 / NBRC 15346 / NCIMB 9279 / VKM B-1422 / R1) protein is D-alanine--D-alanine ligase.